Here is a 40-residue protein sequence, read N- to C-terminus: Large ribosomal subunit protein bL36A (40 aa).

Belongs to the bacterial ribosomal protein bL36 family.

The chain is Large ribosomal subunit protein bL36A from Kineococcus radiotolerans (strain ATCC BAA-149 / DSM 14245 / SRS30216).